Here is a 502-residue protein sequence, read N- to C-terminus: T-complex protein 11-like X-linked protein 1 (502 aa).

Residues 1–36 form a disordered region; the sequence is MPKTEETVLQNDPSVAENGAPEPKTPGQSQKSKSFC.

This sequence belongs to the TCP11 family.

In Homo sapiens (Human), this protein is T-complex protein 11-like X-linked protein 1.